Here is a 708-residue protein sequence, read N- to C-terminus: Leukotoxin translocation ATP-binding protein LktB (708 aa).

One can recognise a Peptidase C39 domain in the interval 1-126; the sequence is MEANHQRNDL…ACYQGQLILV (126 aa). The 283-residue stretch at 155–437 folds into the ABC transmembrane type-1 domain; it reads FLETLIVSIF…LAQLWQDFQQ (283 aa). 5 consecutive transmembrane segments (helical) span residues 159 to 179, 192 to 212, 270 to 290, 296 to 316, and 389 to 409; these read LIVSIFLQIFALITPLFFQVV, LNIITVALAIVIIFEIVLSGL, ALTSVLDLLFSFIFFAVMWYY, LVILGSLPCYILWSIFISPIL, and VMVINLWLGAHLVISGDLSIG. Residues 469–704 form the ABC transporter domain; sequence ISFKNIRFRY…SNGLYSYLHQ (236 aa). An ATP-binding site is contributed by 503–510; sequence GRSGSGKS.

Belongs to the ABC transporter superfamily. Protein-1 exporter (TC 3.A.1.109) family. Homodimer.

The protein resides in the cell inner membrane. It carries out the reaction ATP + H2O + proteinSide 1 = ADP + phosphate + proteinSide 2.. Part of the ABC transporter complex LktBD involved in leukotoxin export. Transmembrane domains (TMD) form a pore in the inner membrane and the ATP-binding domain (NBD) is responsible for energy generation. The polypeptide is Leukotoxin translocation ATP-binding protein LktB (lktB) (Mannheimia haemolytica (Pasteurella haemolytica)).